Consider the following 284-residue polypeptide: Protoheme IX farnesyltransferase (284 aa).

Transmembrane regions (helical) follow at residues 13 to 33, 35 to 55, 87 to 107, 108 to 128, 133 to 153, 162 to 182, 224 to 244, and 264 to 284; these read IIIGNIILIIGSFLFSSFPFF, VFLFFFTILGTSLVIASSCIF, IFASFIGIVGFFILGLFVNIL, SMFLSFIGFVIYVFFYTFFLK, YSTFIGSFSGSIPSVIGHTAI, FLLFIIFIFWQMSHFYAIAIL, FLGYLSYIFLLFFSFFSFYWL, and FYYSIAVVILFNFLISIDFIF.

The protein belongs to the UbiA prenyltransferase family. Protoheme IX farnesyltransferase subfamily.

The protein resides in the cell membrane. The catalysed reaction is heme b + (2E,6E)-farnesyl diphosphate + H2O = Fe(II)-heme o + diphosphate. It functions in the pathway porphyrin-containing compound metabolism; heme O biosynthesis; heme O from protoheme: step 1/1. Functionally, converts heme B (protoheme IX) to heme O by substitution of the vinyl group on carbon 2 of heme B porphyrin ring with a hydroxyethyl farnesyl side group. This chain is Protoheme IX farnesyltransferase, found in Buchnera aphidicola subsp. Schizaphis graminum (strain Sg).